A 368-amino-acid chain; its full sequence is Cyanide hydratase (368 aa).

Residues 6-285 (YKAAVVTSEP…DGLMYVDIDL (280 aa)) enclose the CN hydrolase domain. The active-site Proton acceptor is the Glu-46. Residue Lys-128 is part of the active site. Catalysis depends on Cys-163, which acts as the Nucleophile. Residues 341–368 (LDRPLEEEDYRQGTDAGETEKASSNGHA) are disordered.

It belongs to the carbon-nitrogen hydrolase superfamily. Nitrilase family. As to quaternary structure, oligomer of dimers, forming left-handed helical fibers.

The enzyme catalyses formamide = hydrogen cyanide + H2O. Catalyzes the hydration of cyanide to formamide. Degradation of cyanide may be important for plant pathogenic fungi in infection of cyanogenic plants. The sequence is that of Cyanide hydratase from Microdochium sorghi (Zonate leaf spot disease fungus).